The primary structure comprises 662 residues: Transmembrane 9 superfamily member 2 (662 aa).

The N-terminal stretch at 1–28 is a signal peptide; sequence MSSRPPASPPAQGSRLLLLSLLLLGTVP. Over 29-299 the chain is Lumenal; the sequence is GPRPGSAFYL…LESMPHTHIQ (271 aa). A helical membrane pass occupies residues 300–320; that stretch reads WFSIMNSLVIVLFLSGMVAMI. The Cytoplasmic segment spans residues 321–373; sequence MLRTLHKDIARYNQMDSTEDAQEEFGWKLVHGDIFRPPRKGMLLSVFLGSGTQ. Residues 374–394 form a helical membrane-spanning segment; the sequence is ILIMTFVTLFFACLGFLSPAN. Over 395-397 the chain is Lumenal; it reads RGA. The chain crosses the membrane as a helical span at residues 398–418; the sequence is LMTCAVVLWVLLGTPAGYVAA. Over 419–436 the chain is Cytoplasmic; that stretch reads RFYKSFGGEKWKTNVLLT. A helical transmembrane segment spans residues 437 to 457; it reads SFLCPGIVFADFFIMNLILWG. The Lumenal segment spans residues 458–465; that stretch reads EGSSAAIP. Residues 466–486 form a helical membrane-spanning segment; that stretch reads FGTLVAILALWFCISVPLTFI. The Cytoplasmic portion of the chain corresponds to 487–521; the sequence is GAYFGFKKNAIEHPVRTNQIPRQIPEQSFYTKPLP. A helical transmembrane segment spans residues 522 to 542; that stretch reads GIIMGGILPFGCIFIQLFFIL. At 543–553 the chain is on the lumenal side; sequence NSIWSHQMYYM. Residues 554–574 form a helical membrane-spanning segment; it reads FGFLFLVFIILVITCSEATIL. Over 575–590 the chain is Cytoplasmic; it reads LCYFHLCAEDYHWQWR. The chain crosses the membrane as a helical span at residues 591-611; it reads SFLTSGFTAVYFLIYAIHYFF. The Lumenal segment spans residues 612–630; it reads SKLQITGTASTILYFGYTM. The chain crosses the membrane as a helical span at residues 631-651; that stretch reads IMVLIFFLFTGTIGFFACFWF. Over 652–662 the chain is Cytoplasmic; the sequence is VTKIYSVVKVD.

This sequence belongs to the nonaspanin (TM9SF) (TC 9.A.2) family.

The protein resides in the endosome membrane. It is found in the golgi outpost. It localises to the cytoplasm. Its subcellular location is the cytoskeleton. The protein localises to the microtubule organizing center. In the intracellular compartments, may function as a channel or small molecule transporter. The chain is Transmembrane 9 superfamily member 2 (Tm9sf2) from Mus musculus (Mouse).